A 546-amino-acid chain; its full sequence is Phosphoglucomutase (546 aa).

The active-site Phosphoserine intermediate is the serine 135. Mg(2+) is bound by residues serine 135, aspartate 288, aspartate 290, and aspartate 292.

This sequence belongs to the phosphohexose mutase family. Mg(2+) serves as cofactor.

It carries out the reaction alpha-D-glucose 1-phosphate = alpha-D-glucose 6-phosphate. It functions in the pathway glycolipid metabolism; diglucosyl-diacylglycerol biosynthesis. Its function is as follows. Catalyzes the interconversion between glucose-6-phosphate and alpha-glucose-1-phosphate. This is the first step in the biosynthesis of diglucosyl-diacylglycerol (Glc2-DAG), i.e. a glycolipid found in the membrane, which is also used as a membrane anchor for lipoteichoic acid (LTA). This chain is Phosphoglucomutase (pgcA), found in Staphylococcus epidermidis (strain ATCC 12228 / FDA PCI 1200).